The sequence spans 465 residues: Serine/threonine-protein kinase 38 (465 aa).

N-acetylalanine is present on alanine 2. Positions lysine 62 to glutamate 87 are interaction with S100B. Threonine 74 carries the phosphothreonine modification. The region spanning phenylalanine 89–phenylalanine 382 is the Protein kinase domain. ATP contacts are provided by residues isoleucine 95–valine 103 and lysine 118. Catalysis depends on aspartate 212, which acts as the Proton acceptor. Serine 264 carries the phosphoserine modification. Serine 281 bears the Phosphoserine; by autocatalysis mark. A UFM1-interacting motif (UFIM) motif is present at residues tryptophan 306–isoleucine 311. The AGC-kinase C-terminal domain maps to glutamate 383–glycine 455. Position 444 is a phosphothreonine; by STK24/MST3 (threonine 444).

It belongs to the protein kinase superfamily. AGC Ser/Thr protein kinase family. In terms of assembly, homodimeric S100B binds two molecules of STK38. Interacts with MOB1 and MOB2. Interacts with MAP3K1 and MAP3K2 (via the kinase catalytic domain). Forms a tripartite complex with MOBKL1B and STK3/MST2. Interacts with MICAL1; leading to inhibit the protein kinase activity by antagonizing activation by MST1/STK4. Requires Mg(2+) as cofactor. In terms of processing, ISGylated. Post-translationally, phosphorylated by STK3/MST2 and this is enhanced by MOBKL1B. As to expression, ubiquitously expressed with highest levels observed in peripheral blood leukocytes.

The protein resides in the nucleus. The protein localises to the cytoplasm. It localises to the chromosome. It carries out the reaction L-seryl-[protein] + ATP = O-phospho-L-seryl-[protein] + ADP + H(+). It catalyses the reaction L-threonyl-[protein] + ATP = O-phospho-L-threonyl-[protein] + ADP + H(+). Activated by binding of S100B which releases autoinhibitory N-lobe interactions, enabling ATP to bind and the autophosphorylation of Ser-281. Thr-444 then undergoes calcium-dependent phosphorylation by STK24/MST3. Interactions between phosphorylated Thr-444 and the N-lobe promote additional structural changes that complete the activation of the kinase. Autoinhibition is also released by the binding of MOB1/MOBKL1A and MOB2/HCCA2 to the N-terminal of STK38. Functionally, serine/threonine-protein kinase that acts as a negative regulator of MAP3K1/2 signaling. Converts MAP3K2 from its phosphorylated form to its non-phosphorylated form and inhibits autophosphorylation of MAP3K2. Acts as an ufmylation 'reader' in a kinase-independent manner: specifically recognizes and binds mono-ufmylated histone H4 in response to DNA damage, promoting the recruitment of SUV39H1 to the double-strand breaks, resulting in ATM activation. In Homo sapiens (Human), this protein is Serine/threonine-protein kinase 38.